Consider the following 358-residue polypeptide: DNA replication and repair protein RecF (358 aa).

G30–T37 provides a ligand contact to ATP.

The protein belongs to the RecF family.

The protein resides in the cytoplasm. Functionally, the RecF protein is involved in DNA metabolism; it is required for DNA replication and normal SOS inducibility. RecF binds preferentially to single-stranded, linear DNA. It also seems to bind ATP. In Edwardsiella ictaluri (strain 93-146), this protein is DNA replication and repair protein RecF.